A 263-amino-acid chain; its full sequence is Protein M1627_2099 (263 aa).

Belongs to the CinA family.

The sequence is that of Protein M1627_2099 from Saccharolobus islandicus (strain M.16.27) (Sulfolobus islandicus).